The primary structure comprises 948 residues: ATPase 2, plasma membrane-type (948 aa).

Residue Ser2 is modified to N-acetylserine. Residues 2–61 are Cytoplasmic-facing; it reads SSLEDIKNETVDLEKIPIEEVFQQLKCSREGLTTQEGEDRIQIFGPNKLEEKKESKLLKF. Residues 62–81 traverse the membrane as a helical segment; sequence LGFMWNPLSWVMEMAAIMAI. Residues 82–93 are Extracellular-facing; sequence ALANGDGRPPDW. The helical transmembrane segment at 94–114 threads the bilayer; sequence QDFVGIICLLVINSTISFIEE. Residues 115 to 243 are Cytoplasmic-facing; it reads NNAGNAAAAL…GHFQKVLTAI (129 aa). A helical membrane pass occupies residues 244–264; it reads GNFCICSIAIGMVIEIIVMYP. Over 265-273 the chain is Extracellular; sequence IQRRKYRDG. Residues 274–291 form a helical membrane-spanning segment; sequence IDNLLVLLIGGIPIAMPT. Over 292–643 the chain is Cytoplasmic; that stretch reads VLSVTMAIGS…TSRAIFQRMK (352 aa). The active-site 4-aspartylphosphate intermediate is Asp329. Residues Asp588 and Asp592 each contribute to the Mg(2+) site. The helical transmembrane segment at 644–665 threads the bilayer; sequence NYTIYAVSITIRIVFGFMLIAL. The Extracellular portion of the chain corresponds to 666–670; the sequence is IWEFD. A helical transmembrane segment spans residues 671-693; that stretch reads FSAFMVLIIAILNDGTIMTISKD. At 694-709 the chain is on the cytoplasmic side; sequence RVKPSPTPDSWKLKEI. Residues 710–730 traverse the membrane as a helical segment; it reads FATGVVLGGYQAIMTVIFFWA. The Extracellular segment spans residues 731–751; the sequence is AHKTDFFSDTFGVRSIRDNNH. A helical transmembrane segment spans residues 752 to 772; the sequence is ELMGAVYLQVSIISQALIFVT. Topologically, residues 773 to 784 are cytoplasmic; it reads RSRSWSFVERPG. A helical transmembrane segment spans residues 785-805; it reads ALLMIAFLIAQLIATLIAVYA. Residues 806–813 are Extracellular-facing; that stretch reads NWEFAKIR. Residues 814–834 traverse the membrane as a helical segment; the sequence is GIGWGWAGVIWLYSIVTYFPL. Over 835 to 948 the chain is Cytoplasmic; that stretch reads DVFKFAIRYI…DIETPSHYTV (114 aa). Residue Thr881 is modified to Phosphothreonine. Ser899 carries the phosphoserine modification. Ser931 is modified (phosphoserine; by CIPK11). Positions 946 to 948 are interaction with 14-3-3 proteins; sequence YTV. The residue at position 947 (Thr947) is a Phosphothreonine.

This sequence belongs to the cation transport ATPase (P-type) (TC 3.A.3) family. Type IIIA subfamily. As to quaternary structure, binds to 14-3-3 proteins. The binding is induced by phosphorylation of Thr-947 and it activates the H(+)-ATPase. Interacts (via the R-domain) with PSY1R (via C-terminus). Part of a functional complex containing PSKR1, BAK1, CNGC17, and AHA. Interacts with CNGC17 and PSKR1. Interacts with PP2C67/PP2C-D1 at the plasma membrane. Interacts with AHA1. Post-translationally, phosphorylated, probably by PHOT1 and PHOT2, at C-terminal Thr-947 in guard cells in response to blue light to induce stomatal opening. In terms of processing, phosphorylation at Thr-881 by PSY1R. This phosphorylation activates proton pumping. Decreased phosphorylation in response to flg22 elicitation. Phosphorylation at Ser-899 is specifically induced by RALF1, thus leading to the inhibition of proton transport. Increased phosphorylation in response to flg22 elicitation. Post-translationally, phosphorylation of Thr-947 induces the binding to 14-3-3 proteins, but phosphorylation of Ser-931 interferes with this binding no matter whether Thr-947 is phosphorylated or not. Decreased phosphorylation in response to flg22 elicitation. Phosphorylation of Thr-947 is enhanced by the presence of brassinolide (BL) via the BRI1-BIN2 pathway and prior the trigger of hypocotyl elongation. Inactivated by PP2C67/PP2C-D1-mediated Thr-947 dephosphorylation; SAUR19 inhibits the action of PP2C67/PP2C-D1 and thus promotes the active phosphorylated form. In terms of processing, abscisic acid induces dephosphorylation of AHA2 in etiolated seedlings, suppressing ATP hydrolysis and hypocotyl elongation. As to expression, higher levels in roots than in shoots. Expressed in epidermal and root cortex cells, in phloem, xylem and root hairs. Detected in cotyledons, leaves, hypocotyls, roots and root hairs. Expressed in guard cells and mesophyll cells.

Its subcellular location is the cell membrane. The enzyme catalyses ATP + H2O + H(+)(in) = ADP + phosphate + 2 H(+)(out). Its activity is regulated as follows. Regulated by an auto-inhibitory C-terminal domain that can be displaced by phosphorylation of Thr-947 and the subsequent binding of 14-3-3 proteins. Negatively regulated by PKS5. PKS5 phosphorylates Ser-931, inhibiting interaction with the activating 14-3-3 protein. Positively regulated by PSY1R. PSY1R phosphorylates Thr-881, situated in the auto-inhibitory region I of the C-terminal domain, causing pump activation. Negatively regulated by the secreted peptide RALF. After specific binding to FERONIA, RALF causes phosphorylation at Ser-899, mediating the inhibition of proton transport. Activated by lysophospholipids, without the involvement of phosphorylation of Thr-947. This activation is critically dependent on the single autoinhibitory residue Leu-919. Repressed by PP2C-D phosphatases (e.g. PP2C67/PP2C-D1 and PP2C64/PP2C-D5) which dephosphorylates Thr-947. Triggered by SAUR19 via phosphorylation of the C-terminal autoinhibitory domain (e.g. Thr-947), as a result of the inhibition of PP2C67/PP2C-D1. Phosphorylation on Thr residues is repressed by tyrphostin 9, sphingosine, GW5074 and BML-265. By contrast, the fungal phytotoxin fusicoccin (FC) promotes phosphorylation of Thr-947 independently to BHP, thus leading to large stomatal opening. Its function is as follows. The plasma membrane H(+) ATPase of plants and fungi generates a proton gradient that drives the active transport of nutrients by H(+)-symport. The resulting external acidification and/or internal alkinization may mediate growth responses. Involved in maintaining the membrane potential and delta-pH, together forming the plasma membrane protonmotive force (PMF) required for root and hypocotyl elongation and root tropism. Important for root growth and development during different nitrogen regimes. Forms a functional cation-translocating unit with CNGC17 that is activated by PSKR1/BAK1 and possibly other BAK1/RLK complexes. Promotes stomatal opening in response to blue light. This is ATPase 2, plasma membrane-type from Arabidopsis thaliana (Mouse-ear cress).